A 314-amino-acid polypeptide reads, in one-letter code: 1,4-dihydroxy-2-naphthoyl-CoA synthase (314 aa).

Residues R58, 103–107, Y115, 157–161, T184, S190, Y287, and K302 each bind substrate; these read SGGDQ and WAAGG.

Belongs to the enoyl-CoA hydratase/isomerase family. MenB subfamily.

It catalyses the reaction 2-succinylbenzoyl-CoA + H(+) = 1,4-dihydroxy-2-naphthoyl-CoA + H2O. It functions in the pathway quinol/quinone metabolism; 1,4-dihydroxy-2-naphthoate biosynthesis; 1,4-dihydroxy-2-naphthoate from chorismate: step 6/7. The protein operates within quinol/quinone metabolism; menaquinone biosynthesis. Functionally, converts o-succinylbenzoyl-CoA (OSB-CoA) to 1,4-dihydroxy-2-naphthoyl-CoA (DHNA-CoA). In Mycobacterium tuberculosis (strain CDC 1551 / Oshkosh), this protein is 1,4-dihydroxy-2-naphthoyl-CoA synthase.